The following is a 341-amino-acid chain: NADH-ubiquinone oxidoreductase chain 2 (341 aa).

The next 9 membrane-spanning stretches (helical) occupy residues 8–28, 61–81, 95–115, 145–165, 174–191, 195–215, 238–258, 272–292, and 321–341; these read IFLI…SWLG, FLTQ…LMFL, ILIL…FWFP, FIYN…SLGG, LMAF…LAMM, MLWM…VLMF, LLIF…GFLP, LFIL…YLRL, and LIFN…YIIM.

It belongs to the complex I subunit 2 family.

The protein resides in the mitochondrion inner membrane. The enzyme catalyses a ubiquinone + NADH + 5 H(+)(in) = a ubiquinol + NAD(+) + 4 H(+)(out). Core subunit of the mitochondrial membrane respiratory chain NADH dehydrogenase (Complex I) that is believed to belong to the minimal assembly required for catalysis. Complex I functions in the transfer of electrons from NADH to the respiratory chain. The immediate electron acceptor for the enzyme is believed to be ubiquinone. The sequence is that of NADH-ubiquinone oxidoreductase chain 2 (mt:ND2) from Anopheles gambiae (African malaria mosquito).